The sequence spans 404 residues: Homoserine O-succinyltransferase (404 aa).

Over residues 1-25 the composition is skewed to low complexity; that stretch reads MTDIQADPAVTAADAAQADTSSPTA. The interval 1–30 is disordered; the sequence is MTDIQADPAVTAADAAQADTSSPTAHQGKP. Residues 75–384 form the AB hydrolase-1 domain; it reads NAVLICHALN…HGHDAFLLED (310 aa). Ser-179 (nucleophile) is an active-site residue. Substrate is bound at residue Arg-249. Active-site residues include Asp-344 and His-377. Asp-378 contributes to the substrate binding site.

Belongs to the AB hydrolase superfamily. MetX family. As to quaternary structure, homodimer.

Its subcellular location is the cytoplasm. The enzyme catalyses L-homoserine + succinyl-CoA = O-succinyl-L-homoserine + CoA. The protein operates within amino-acid biosynthesis; L-methionine biosynthesis via de novo pathway; O-succinyl-L-homoserine from L-homoserine: step 1/1. Its function is as follows. Transfers a succinyl group from succinyl-CoA to L-homoserine, forming succinyl-L-homoserine. This chain is Homoserine O-succinyltransferase, found in Ralstonia pickettii (strain 12J).